We begin with the raw amino-acid sequence, 185 residues long: Ribosome-recycling factor (185 aa).

It belongs to the RRF family.

The protein resides in the cytoplasm. In terms of biological role, responsible for the release of ribosomes from messenger RNA at the termination of protein biosynthesis. May increase the efficiency of translation by recycling ribosomes from one round of translation to another. This chain is Ribosome-recycling factor, found in Symbiobacterium thermophilum (strain DSM 24528 / JCM 14929 / IAM 14863 / T).